Reading from the N-terminus, the 150-residue chain is Arginine repressor (150 aa).

It belongs to the ArgR family.

It is found in the cytoplasm. The protein operates within amino-acid biosynthesis; L-arginine biosynthesis [regulation]. Regulates arginine biosynthesis genes. The protein is Arginine repressor of Ruminiclostridium cellulolyticum (strain ATCC 35319 / DSM 5812 / JCM 6584 / H10) (Clostridium cellulolyticum).